The primary structure comprises 238 residues: Pyruvate formate-lyase-activating enzyme (238 aa).

The 222-residue stretch at 15-236 (VDGPGIRTVV…KKLEKYLKEL (222 aa)) folds into the Radical SAM core domain. [4Fe-4S] cluster contacts are provided by cysteine 29, cysteine 33, and cysteine 36. S-adenosyl-L-methionine is bound by residues 35–37 (YCH), glycine 78, 126–128 (DIK), and histidine 199.

The protein belongs to the organic radical-activating enzymes family. It depends on [4Fe-4S] cluster as a cofactor.

Its subcellular location is the cytoplasm. The catalysed reaction is glycyl-[formate C-acetyltransferase] + reduced [flavodoxin] + S-adenosyl-L-methionine = glycin-2-yl radical-[formate C-acetyltransferase] + semiquinone [flavodoxin] + 5'-deoxyadenosine + L-methionine + H(+). In terms of biological role, activation of pyruvate formate-lyase under anaerobic conditions by generation of an organic free radical, using S-adenosylmethionine and reduced flavodoxin as cosubstrates to produce 5'-deoxy-adenosine. The chain is Pyruvate formate-lyase-activating enzyme (act) from Clostridium pasteurianum.